A 341-amino-acid polypeptide reads, in one-letter code: Phenylalanine--tRNA ligase alpha subunit (341 aa).

Glu-255 is a binding site for Mg(2+).

This sequence belongs to the class-II aminoacyl-tRNA synthetase family. Phe-tRNA synthetase alpha subunit type 1 subfamily. In terms of assembly, tetramer of two alpha and two beta subunits. Requires Mg(2+) as cofactor.

The protein localises to the cytoplasm. It carries out the reaction tRNA(Phe) + L-phenylalanine + ATP = L-phenylalanyl-tRNA(Phe) + AMP + diphosphate + H(+). This chain is Phenylalanine--tRNA ligase alpha subunit, found in Natranaerobius thermophilus (strain ATCC BAA-1301 / DSM 18059 / JW/NM-WN-LF).